We begin with the raw amino-acid sequence, 667 residues long: Capsid polyprotein (667 aa).

Residues 8–154 (STLEVKALDD…AEATITSVKS (147 aa)) form a prohead protease activity region.

Post-translationally, the prohead protease may be autocatalytically cleaved giving rise to the mature capsid protein.

It is found in the virion. In terms of biological role, the C-terminus contains the capsid protein. The N-terminal region may act as a prohead protease. The polypeptide is Capsid polyprotein (Pseudomonas aeruginosa).